Here is a 439-residue protein sequence, read N- to C-terminus: 23S rRNA (uracil(1939)-C(5))-methyltransferase RlmD (439 aa).

Positions 10–69 constitute a TRAM domain; sequence KTQLNTRHQAVQVERLDHHGAGIAYLKKKPLFIDGALPGEEVVTQLVEEKSKFARGKLIK. Residues Cys-82, Cys-88, Cys-91, and Cys-169 each coordinate [4Fe-4S] cluster. Residues Gln-272, Phe-301, Asn-306, Glu-322, Asn-349, and Asp-370 each coordinate S-adenosyl-L-methionine. The Nucleophile role is filled by Cys-396.

Belongs to the class I-like SAM-binding methyltransferase superfamily. RNA M5U methyltransferase family. RlmD subfamily.

It carries out the reaction uridine(1939) in 23S rRNA + S-adenosyl-L-methionine = 5-methyluridine(1939) in 23S rRNA + S-adenosyl-L-homocysteine + H(+). Catalyzes the formation of 5-methyl-uridine at position 1939 (m5U1939) in 23S rRNA. In Vibrio parahaemolyticus serotype O3:K6 (strain RIMD 2210633), this protein is 23S rRNA (uracil(1939)-C(5))-methyltransferase RlmD.